A 591-amino-acid chain; its full sequence is Aspartate--tRNA ligase (591 aa).

Position 172 (E172) interacts with L-aspartate. The tract at residues 196 to 199 (QLFK) is aspartate. R218 contributes to the L-aspartate binding site. ATP is bound by residues 218-220 (RDE) and Q227. H449 contributes to the L-aspartate binding site. An ATP-binding site is contributed by E483. R490 provides a ligand contact to L-aspartate. ATP is bound at residue 535-538 (GLDR).

Belongs to the class-II aminoacyl-tRNA synthetase family. Type 1 subfamily. As to quaternary structure, homodimer.

It is found in the cytoplasm. It carries out the reaction tRNA(Asp) + L-aspartate + ATP = L-aspartyl-tRNA(Asp) + AMP + diphosphate. Functionally, catalyzes the attachment of L-aspartate to tRNA(Asp) in a two-step reaction: L-aspartate is first activated by ATP to form Asp-AMP and then transferred to the acceptor end of tRNA(Asp). The chain is Aspartate--tRNA ligase from Actinobacillus pleuropneumoniae serotype 7 (strain AP76).